The chain runs to 296 residues: Arginase (296 aa).

Residues H97, D120, H122, and D124 each contribute to the Mn(2+) site. Substrate is bound by residues 122–126, 133–135, and D176; these read HGDLN and SGN. Mn(2+) contacts are provided by D223 and D225. Positions 237 and 268 each coordinate substrate.

Belongs to the arginase family. Mn(2+) serves as cofactor.

The catalysed reaction is L-arginine + H2O = urea + L-ornithine. It participates in nitrogen metabolism; urea cycle; L-ornithine and urea from L-arginine: step 1/1. Its function is as follows. Involved in the catabolism of arginine. This Bacillus subtilis (strain 168) protein is Arginase.